The chain runs to 767 residues: Pre-mRNA-splicing factor ATP-dependent RNA helicase PRP43 (767 aa).

The segment at 1–74 (MGSKRRFSSE…KLEDGKINPF (74 aa)) is disordered. Residues Ser8 and Ser9 each carry the phosphoserine modification. A compositionally biased stretch (basic and acidic residues) spans 58-70 (TSAEEAQKLEDGK). One can recognise a Helicase ATP-binding domain in the interval 103 to 268 (LKLYQNNQIM…FNDAPLLAVP (166 aa)). 116 to 123 (GETGSGKT) is a binding site for ATP. Residues 215–218 (DEAH) carry the DEAH box motif. The Helicase C-terminal domain occupies 293–473 (TVLQIHATEE…STVLELKKLG (181 aa)).

This sequence belongs to the DEAD box helicase family. DEAH subfamily. DDX15/PRP43 sub-subfamily. As to quaternary structure, component of the NTR complex (NTC-related complex), composed of NTR1, NTR2 and PRP43. Interacts with NTR1 and NTR2. Interacts with SPP382.

It localises to the nucleus. It carries out the reaction ATP + H2O = ADP + phosphate + H(+). Pre-mRNA processing factor involved in disassembly of spliceosomes after the release of mature mRNA. The protein is Pre-mRNA-splicing factor ATP-dependent RNA helicase PRP43 (PRP43) of Saccharomyces cerevisiae (strain ATCC 204508 / S288c) (Baker's yeast).